A 304-amino-acid polypeptide reads, in one-letter code: C-type lectin domain-containing protein 141 (304 aa).

The N-terminal stretch at 1-19 (MRSSSTLLIAFGLFLASMS) is a signal peptide. A disordered region spans residues 29 to 100 (GSGGHRPPSS…TTPEPTTTKV (72 aa)). The span at 51–99 (TKPPKSTSTPSTSTSTPTTTTTTTTTTTTTPTTTTTTTTTTTPEPTTTK) shows a compositional bias: low complexity.

The polypeptide is C-type lectin domain-containing protein 141 (clec-141) (Caenorhabditis elegans).